The sequence spans 173 residues: uncharacterized protein (173 aa).

This is an uncharacterized protein from Rhodospirillum rubrum.